We begin with the raw amino-acid sequence, 639 residues long: Probable serine/threonine-protein kinase DDB_G0282777 (639 aa).

Residues 7-122 are a coiled coil; sequence LKENKESLKD…EDLKSIILTS (116 aa). The region spanning 233–588 is the Protein kinase domain; the sequence is MHMVGDIKKG…SNNNQNHTNI (356 aa). Residues 239-247 and Lys-284 each bind ATP; that span reads IKKGSISSD. Asp-439 acts as the Proton acceptor in catalysis. A disordered region spans residues 601-639; that stretch reads NTLETSTTNPNTNTTTSDTNTSTTSTTNTNTTTSNTITA.

This sequence belongs to the protein kinase superfamily. Ser/Thr protein kinase family.

It carries out the reaction L-seryl-[protein] + ATP = O-phospho-L-seryl-[protein] + ADP + H(+). The catalysed reaction is L-threonyl-[protein] + ATP = O-phospho-L-threonyl-[protein] + ADP + H(+). This is Probable serine/threonine-protein kinase DDB_G0282777 from Dictyostelium discoideum (Social amoeba).